Here is a 148-residue protein sequence, read N- to C-terminus: Calmodulin (148 aa).

At alanine 2 the chain carries N-acetylalanine. EF-hand domains follow at residues 8–43, 44–79, 81–116, and 116–148; these read DQIS…LGQN, PTEA…KMKD, DSEE…LGEK, and KLTD…MMAK. Ca(2+) is bound by residues aspartate 21, aspartate 23, aspartate 25, cysteine 27, glutamate 32, aspartate 57, aspartate 59, asparagine 61, threonine 63, glutamate 68, aspartate 94, aspartate 96, asparagine 98, and glutamate 105. Residue lysine 116 is modified to N6,N6,N6-trimethyllysine. Residues aspartate 129, aspartate 131, aspartate 133, glutamine 135, and glutamate 140 each coordinate Ca(2+).

It belongs to the calmodulin family.

Calmodulin mediates the control of a large number of enzymes, ion channels and other proteins by Ca(2+). Among the enzymes to be stimulated by the calmodulin-Ca(2+) complex are a number of protein kinases and phosphatases. The chain is Calmodulin (CAMF1) from Fagus sylvatica (Beechnut).